A 525-amino-acid chain; its full sequence is Serine/threonine protein phosphatase 2A 55 kDa regulatory subunit B beta isoform (525 aa).

The segment at 1–31 is disordered; sequence MDPFSKSPDDDDLRPEAEAARRPQPQPQPRE. 2 WD repeats span residues 48–87 and 124–165; these read QEVD…DSAS and EIEE…VKRI. The segment at 169 to 191 is disordered; that stretch reads NLNTSQSSGNGTTSSSSSSSSRA. The segment covering 171 to 189 has biased composition (low complexity); that stretch reads NTSQSSGNGTTSSSSSSSS. 4 WD repeats span residues 244–282, 293–333, 352–390, and 495–525; these read AHDY…QSFN, DLTE…LCDN, EIIA…GPVA, and DLST…MYYA.

This sequence belongs to the phosphatase 2A regulatory subunit B family. In terms of assembly, PP2A consists of a common heteromeric enzyme, composed of a catalytic subunit (subunits C), a constant regulatory subunit (subunit A), and a variety of regulatory subunits such as subunits B (the R2/B/PR55/B55, R3/B''/PR72/PR130/PR59 and R5/B'/B56 families).

Functionally, the B regulatory subunit may modulate substrate selectivity and catalytic activity, and may also direct the localization of the catalytic enzyme to a particular subcellular compartment. The chain is Serine/threonine protein phosphatase 2A 55 kDa regulatory subunit B beta isoform from Oryza sativa subsp. indica (Rice).